The chain runs to 100 residues: Large ribosomal subunit protein bL21 (100 aa).

Belongs to the bacterial ribosomal protein bL21 family. In terms of assembly, part of the 50S ribosomal subunit. Contacts protein L20.

In terms of biological role, this protein binds to 23S rRNA in the presence of protein L20. This chain is Large ribosomal subunit protein bL21, found in Mycoplasmoides gallisepticum (strain R(low / passage 15 / clone 2)) (Mycoplasma gallisepticum).